Consider the following 415-residue polypeptide: Transcription factor gsfR2 (415 aa).

The segment at residues 9–36 is a DNA-binding region (zn(2)-C6 fungal-type); the sequence is CITCVQSKRKCDQGLPKCQRCLAKNIHC. The segment at 65–91 is disordered; the sequence is AEEPSRGCQLQRSPARPTSPTHSPHAN. A compositionally biased stretch (polar residues) spans 72-88; the sequence is CQLQRSPARPTSPTHSP.

It localises to the nucleus. Transcription factor that regulates expression of the gene cluster that mediates the biosynthesis of Griseofulvin, an important antifungal drug that has been in use for a long time for treating dermatophyte infections. This Penicillium aethiopicum protein is Transcription factor gsfR2.